Here is a 257-residue protein sequence, read N- to C-terminus: Zinc import ATP-binding protein ZnuC (257 aa).

In terms of domain architecture, ABC transporter spans 6 to 221 (VRLEQITVAF…AFVETFGHQV (216 aa)). 38-45 (GPNGAGKT) serves as a coordination point for ATP.

Belongs to the ABC transporter superfamily. Zinc importer (TC 3.A.1.15.5) family. The complex is composed of two ATP-binding proteins (ZnuC), two transmembrane proteins (ZnuB) and a solute-binding protein (ZnuA).

Its subcellular location is the cell inner membrane. It carries out the reaction Zn(2+)(out) + ATP(in) + H2O(in) = Zn(2+)(in) + ADP(in) + phosphate(in) + H(+)(in). In terms of biological role, part of the ABC transporter complex ZnuABC involved in zinc import. Responsible for energy coupling to the transport system. The chain is Zinc import ATP-binding protein ZnuC from Marinobacter nauticus (strain ATCC 700491 / DSM 11845 / VT8) (Marinobacter aquaeolei).